The following is a 383-amino-acid chain: Soluble hydrogenase 42 kDa subunit (383 aa).

Lys-194 is subject to N6-(pyridoxal phosphate)lysine.

It belongs to the class-V pyridoxal-phosphate-dependent aminotransferase family. Heterodimer of a large and a small subunit. It depends on pyridoxal 5'-phosphate as a cofactor.

The protein localises to the cytoplasm. Soluble hydrogenase catalyzes both production and consumption of hydrogen from suitable artificial electron donors or acceptors. This subunit catalyzes the tritium-exchange activity. This Anabaena cylindrica protein is Soluble hydrogenase 42 kDa subunit.